A 572-amino-acid chain; its full sequence is Urease subunit alpha (572 aa).

Positions 136 to 572 (GGIDTHIHWI…VPLAQRYFLF (437 aa)) constitute a Urease domain. Positions 141, 143, and 224 each coordinate Ni(2+). Position 224 is an N6-carboxylysine (K224). H226 lines the substrate pocket. Positions 253 and 279 each coordinate Ni(2+). The active-site Proton donor is H327. Position 367 (D367) interacts with Ni(2+).

It belongs to the metallo-dependent hydrolases superfamily. Urease alpha subunit family. In terms of assembly, heterotrimer of UreA (gamma), UreB (beta) and UreC (alpha) subunits. Three heterotrimers associate to form the active enzyme. The cofactor is Ni cation. In terms of processing, carboxylation allows a single lysine to coordinate two nickel ions.

Its subcellular location is the cytoplasm. It catalyses the reaction urea + 2 H2O + H(+) = hydrogencarbonate + 2 NH4(+). It participates in nitrogen metabolism; urea degradation; CO(2) and NH(3) from urea (urease route): step 1/1. The protein is Urease subunit alpha of Actinobacillus pleuropneumoniae serotype 3 (strain JL03).